The sequence spans 68 residues: Conotoxin Cal14.13c (68 aa).

Residues 1–20 (MKLCVVXVLLMLAMPFNGGE) form the signal peptide. The propeptide occupies 21–68 (ASRFFNQHARSQRSGMKTRGIWCDPPCPEGETCRGGECSDEFNGDLGG). L66 carries the post-translational modification Leucine amide.

In terms of processing, contains 2 disulfide bonds. In terms of tissue distribution, expressed by the venom duct.

It localises to the secreted. Functionally, probable neurotoxin with unknown target. Possibly targets ion channels. This is Conotoxin Cal14.13c from Californiconus californicus (California cone).